Reading from the N-terminus, the 504-residue chain is MITLQNLPWILLYTGFLAIFLSRLFSNGKQSRDEKANGCQPPARYPQWDPIMGLDLVYSQVSALKNNRYLEWLRDLHAKMPKTFSLNFFGQRWIYSIEPEILKAVYATNFRDFGVEPIRRHSKGSMPFADKGVNTTDGEDWEFSRLLIKPFFERNVYTDTDRIKVHADHFLSLIPADGETFDAQPLVQRWFLDLTTEFIFGESMGSLAHPERADIAWTMLDVLRGGRLRAQMHRFMWARDWTWWLKAVYKVHDYVNPYIRSTLKELAEREERIKQGLPVGPERTDLVWSMATHLRDEELLRSQLCLIIVPNNDTTSIFISNCLWHLARHPEVWKKLREEVFALGEETPLTFEILRNMKYLNGVLNETHRVIPNNVTQVRACVQDTVLPVGGGPDGKWPVQVRKGDIVSVTKTVMYRDPDYWGSDADEFRPERFDGLRGTWNFLPFGGGPRRCPAQMMSQTEAAYMLCRLARTYSRIEARDPEPYTAVMRIGPSNKTGVKIALYK.

Residues 7–26 (LPWILLYTGFLAIFLSRLFS) form a helical membrane-spanning segment. Residues asparagine 134, asparagine 312, asparagine 365, and asparagine 374 are each glycosylated (N-linked (GlcNAc...) asparagine). Cysteine 452 contacts heme. Asparagine 494 is a glycosylation site (N-linked (GlcNAc...) asparagine).

Belongs to the cytochrome P450 family. The cofactor is heme.

It is found in the membrane. The catalysed reaction is (3E,5S)-3-[(2E,4E,8S,10E,12Z)-1-hydroxy-4,8-dimethyltetradeca-2,4,10,12-tetraen-1-ylidene]-5-[(4-hydroxyphenyl)methyl]pyrrolidine-2,4-dione + reduced [NADPH--hemoprotein reductase] + O2 = 3-[(2E,4E,8S,10E,12Z)-4,8-dimethyltetradeca-2,4,10,12-tetraenoyl]-4-hydroxy-5-(4-hydroxyphenyl)-1,2-dihydropyridin-2-one + oxidized [NADPH--hemoprotein reductase] + 2 H2O. The protein operates within mycotoxin biosynthesis. Its function is as follows. Cytochrome P450 monooxygenase; part of the gene cluster that mediates the biosynthesis of ilicicolin H, a 4-hydroxy-2-pyridonealkaloid that has potent and broad antifungal activities by inhibiting the mitochondrial respiration chain. IccC catalyzes the ring expansion of the tetramate intermediate to the acyclic 2-pyridone intermediate that contains the trans bis-diene chain. The biosynthesis of ilicicolin H starts with formation of the tetramic acid by the hybrid PKS-NRPS synthetase iccA with the partnering trans-enoyl reductase iccB since iccA lacks a designated enoylreductase (ER) domain. The cytochrome P450 monooxygenase iccC then catalyzes the ring expansion of the tetramate to the acyclic 2-pyridone. The pericyclase iccD further converts the acyclic 2-pyridone into 8-epi-ilicicolin H. Finally, the epimerase iccE converts 8-epi-ilicicolin H into ilicicolin H via epimerization. IccA to iccE are sufficient for ilicicolin H biosynthesis and the roles of the remaining enzymes, iccF, iccG and iccH within the pathway have still to be determined. This chain is Cytochrome P450 monooxygenase iccC, found in Talaromyces variabilis (Penicillium variabile).